Consider the following 211-residue polypeptide: FMN-dependent NADH:quinone oxidoreductase (211 aa).

FMN is bound by residues Ser10 and 16 to 18 (STS).

Belongs to the azoreductase type 1 family. Homodimer. FMN is required as a cofactor.

The catalysed reaction is 2 a quinone + NADH + H(+) = 2 a 1,4-benzosemiquinone + NAD(+). It carries out the reaction N,N-dimethyl-1,4-phenylenediamine + anthranilate + 2 NAD(+) = 2-(4-dimethylaminophenyl)diazenylbenzoate + 2 NADH + 2 H(+). Functionally, quinone reductase that provides resistance to thiol-specific stress caused by electrophilic quinones. Its function is as follows. Also exhibits azoreductase activity. Catalyzes the reductive cleavage of the azo bond in aromatic azo compounds to the corresponding amines. The polypeptide is FMN-dependent NADH:quinone oxidoreductase (Frankia casuarinae (strain DSM 45818 / CECT 9043 / HFP020203 / CcI3)).